The chain runs to 160 residues: Calcium and integrin-binding family member 3 (160 aa).

EF-hand domains are found at residues 39 to 74, 76 to 111, and 117 to 152; these read KDNPFRQRIAQVFSQDGDGHMTLENFLDMFSVMSEM, PRDLKAYYAFKIYDFNNDNYICAWDLEQTVTRLTRG, and EVTLVCEKVLDEADGDQDGRLSLEDFQNMILRAPDF. 10 residues coordinate Ca(2+): Asp89, Asn91, Asp93, Tyr95, Asp100, Asp130, Asp132, Asp134, Arg136, and Asp141.

Monomer and homodimer. Interacts with ITGA2B (via C-terminus cytoplasmic tail region); the interaction is stabilized/increased in a calcium and magnesium-dependent manner. Interacts with TMC1. As to expression, expressed in heart, liver and inner ear. In the inner ear, expressed in vestibule and basilar membrane cells. Expressed in megakaryocytes and endothelial cells.

Acts as an auxiliary subunit of the sensory mechanoelectrical transduction (MET) channel in hair cells. Plays a role in regulating hair cell MET channel localization and function. The polypeptide is Calcium and integrin-binding family member 3 (Cib3) (Mus musculus (Mouse)).